The primary structure comprises 173 residues: NADH-ubiquinone oxidoreductase chain 6 (173 aa).

5 consecutive transmembrane segments (helical) span residues 1–21 (MAYI…SVAS), 25–45 (PYFA…VLMG), 53–73 (LVLF…CAAL), 87–107 (VLGS…WFWG), and 139–159 (LGGG…LVVL).

Belongs to the complex I subunit 6 family.

The protein localises to the mitochondrion membrane. The enzyme catalyses a ubiquinone + NADH + 5 H(+)(in) = a ubiquinol + NAD(+) + 4 H(+)(out). Its function is as follows. Core subunit of the mitochondrial membrane respiratory chain NADH dehydrogenase (Complex I) that is believed to belong to the minimal assembly required for catalysis. Complex I functions in the transfer of electrons from NADH to the respiratory chain. The immediate electron acceptor for the enzyme is believed to be ubiquinone. In Gadus morhua (Atlantic cod), this protein is NADH-ubiquinone oxidoreductase chain 6 (MT-ND6).